The primary structure comprises 160 residues: Cyclic pyranopterin monophosphate synthase (160 aa).

Substrate contacts are provided by residues 77–79 (MCH) and 114–115 (ME). Aspartate 129 is an active-site residue.

Belongs to the MoaC family. Homohexamer; trimer of dimers.

The enzyme catalyses (8S)-3',8-cyclo-7,8-dihydroguanosine 5'-triphosphate = cyclic pyranopterin phosphate + diphosphate. It participates in cofactor biosynthesis; molybdopterin biosynthesis. In terms of biological role, catalyzes the conversion of (8S)-3',8-cyclo-7,8-dihydroguanosine 5'-triphosphate to cyclic pyranopterin monophosphate (cPMP). This chain is Cyclic pyranopterin monophosphate synthase, found in Listeria welshimeri serovar 6b (strain ATCC 35897 / DSM 20650 / CCUG 15529 / CIP 8149 / NCTC 11857 / SLCC 5334 / V8).